The sequence spans 950 residues: Protein lin-54 homolog (950 aa).

Disordered regions lie at residues methionine 1–asparagine 63, asparagine 366–glycine 387, alanine 500–histidine 523, lysine 533–alanine 552, and valine 638–glycine 702. A compositionally biased stretch (acidic residues) spans serine 10–leucine 26. Positions threonine 29 to isoleucine 39 are enriched in basic and acidic residues. Residues glutamate 40–alanine 55 are compositionally biased toward acidic residues. Low complexity-rich tracts occupy residues asparagine 366–serine 386, alanine 500–serine 516, serine 535–alanine 548, and glutamine 661–leucine 682. The 113-residue stretch at arginine 737–aspartate 849 folds into the CRC domain.

Belongs to the lin-54 family. In terms of assembly, component of the DREAM complex at least composed of Myb, Caf1-55, mip40, mip120, mip130, E2f2, Dp, Rbf, Rbf2, lin-52, HDAC1/Rpd3 and l(3)mbt.

The protein localises to the nucleus. In terms of biological role, component of the DREAM complex, a multiprotein complex that can both act as a transcription activator or repressor depending on the context. In follicle cells, the complex plays a central role in the site-specific DNA replication at the chorion loci. During development, the complex represses transcription of developmentally controlled E2F target genes. The sequence is that of Protein lin-54 homolog (mip120) from Drosophila melanogaster (Fruit fly).